The primary structure comprises 214 residues: Large ribosomal subunit protein uL29m (214 aa).

This sequence belongs to the universal ribosomal protein uL29 family. As to quaternary structure, component of the mitochondrial large ribosomal subunit. Mature mitochondrial ribosomes consist of a small (37S) and a large (54S) subunit. The 37S subunit contains at least 33 different proteins and 1 molecule of RNA (15S). The 54S subunit contains at least 45 different proteins and 1 molecule of RNA (21S).

The protein localises to the mitochondrion. In Aspergillus terreus (strain NIH 2624 / FGSC A1156), this protein is Large ribosomal subunit protein uL29m (mrpl4).